Reading from the N-terminus, the 595-residue chain is MPINILSQETVNKIAAGEVVERPLNAVKELVENSLDAFASSITVEIEEAGKKLIRVSDNGFGMDKKDLELSILRHATSKIDDFKDLMHIHSLGFRGEALASIAAVSNFAIKTRKKGENSGWKLSVAGAKDIKVMPWSGAEGTITEVKSLFFNTPARQKFLKSDSTERSRIINSLEETALANYDISFKIFSENKTVFSAAQTDSKTERIADILGKDFAKTLKNIKIDHPKISLDVYFTGRDNSLPNKKYQYLFVNSRPVNYPKRLMHCVYQSYKESIPRDKYPGILIYTDVDPSEIDVNIHPAKREVKFADENGIYDILFKALRNALMSQGHPEIKITYPPLDKEKSAKQEVEGSTAPRFPKIQQPVIYAREPKPKYNYASLKQTCSIDKYADVFAKQEELTPENFDSNIKVIGQVFDTYIIASNKGDLYIFDQHAAAERVRYEFYLSQMKSQTIKIQQMLMPENFDLSPSISELLKANINIFNELGISIEEFGQNSFRITAYPALLGNISMEQIVKTIISDIEDDKHAEIEQKRDKIIRSACRASIKAGDNVSFIEAKKLINDLFKCKQPFTCPHGRPTAYKISLNEIEKFFKRK.

It belongs to the DNA mismatch repair MutL/HexB family.

Functionally, this protein is involved in the repair of mismatches in DNA. It is required for dam-dependent methyl-directed DNA mismatch repair. May act as a 'molecular matchmaker', a protein that promotes the formation of a stable complex between two or more DNA-binding proteins in an ATP-dependent manner without itself being part of a final effector complex. In Endomicrobium trichonymphae, this protein is DNA mismatch repair protein MutL.